An 83-amino-acid polypeptide reads, in one-letter code: RNA-binding protein Hfq (83 aa).

The region spanning 9-68 (DPYLNILRKERIPVSIFLVNGIKLQGQIESFDQFVILLRNTVSQMVYKHAISTVVPSRNV) is the Sm domain.

Belongs to the Hfq family. Homohexamer.

Functionally, RNA chaperone that binds small regulatory RNA (sRNAs) and mRNAs to facilitate mRNA translational regulation in response to envelope stress, environmental stress and changes in metabolite concentrations. Also binds with high specificity to tRNAs. The protein is RNA-binding protein Hfq of Chromohalobacter salexigens (strain ATCC BAA-138 / DSM 3043 / CIP 106854 / NCIMB 13768 / 1H11).